Reading from the N-terminus, the 318-residue chain is Xanthocillin biosynthesis cluster transcription factor xanC (318 aa).

Residues 1–27 (MHSQTTKDEQSKDDSSNEKQDAIERRR) show a composition bias toward basic and acidic residues. A disordered region spans residues 1–39 (MHSQTTKDEQSKDDSSNEKQDAIERRRLQNRLSQRNHRR). The bZIP domain occupies 20 to 52 (QDAIERRRLQNRLSQRNHRRKIRDRIAKLQERV). Residues 25–40 (RRRLQNRLSQRNHRRK) are basic motif. The interval 41–48 (IRDRIAKL) is leucine-zipper. 3 disordered regions span residues 71-107 (PPAA…QRNV), 123-171 (PSSS…FSLD), and 269-318 (GRHC…SMML). 2 stretches are compositionally biased toward low complexity: residues 123–139 (PSSS…PFDL) and 147–171 (STNS…FSLD). Over residues 293–318 (APSSTPFCPLHPSQSSSLDNYQSMML) the composition is skewed to polar residues.

The protein belongs to the bZIP family.

It is found in the nucleus. Functionally, transcription regulator that specifically up-regulates the gene cluster that mediates the biosynthesis of the isocyanide xanthocillin and its derivatives. This chain is Xanthocillin biosynthesis cluster transcription factor xanC, found in Aspergillus fumigatus (strain ATCC MYA-4609 / CBS 101355 / FGSC A1100 / Af293) (Neosartorya fumigata).